Consider the following 428-residue polypeptide: MSAIVDIVGREVLDSRGNPTVECDVLLESGVMGRAAVPSGASTGSREAIELRDGDKSRYLGKGVLKAVEHINTEISEAVLGLDASEQGFLDKTLIDLDGTDNKSRLGANAMLAVSMAVARAAAEESGLPLYRYLGGMGSVQLPVPMMNVINGGAHANNSLDLQEFMIIPVGAPSFREAVRWGAEVFHALKKIIHDKGMSTAVGDEGGFAPSVENHEAAIQLILQAIEAAGYTAGEQIALGLDCAASEFYKDGMYVLEGEGGLQLTAQQWTDMLASWCDKYPIISIEDGMHEGDWDGWKILTERLGHNVQLVGDDLFVTNTKILKEGIDKGIANSILIKINQIGTLTETFAAIEMAKRAGYTAVISHRSGETEDSTIADIAVGTNAGQIKTGSLSRSDRIAKYNQLLRIEEDLGDIAFYPGRAAFYNLR.

Gln163 provides a ligand contact to (2R)-2-phosphoglycerate. The active-site Proton donor is the Glu205. Residues Asp242, Glu286, and Asp313 each contribute to the Mg(2+) site. Lys338, Arg367, Ser368, and Lys389 together coordinate (2R)-2-phosphoglycerate. Catalysis depends on Lys338, which acts as the Proton acceptor.

It belongs to the enolase family. Mg(2+) serves as cofactor.

It localises to the cytoplasm. It is found in the secreted. Its subcellular location is the cell surface. The catalysed reaction is (2R)-2-phosphoglycerate = phosphoenolpyruvate + H2O. It participates in carbohydrate degradation; glycolysis; pyruvate from D-glyceraldehyde 3-phosphate: step 4/5. Its function is as follows. Catalyzes the reversible conversion of 2-phosphoglycerate (2-PG) into phosphoenolpyruvate (PEP). It is essential for the degradation of carbohydrates via glycolysis. The sequence is that of Enolase from Acidovorax sp. (strain JS42).